A 92-amino-acid chain; its full sequence is Small ribosomal subunit protein uS19 (92 aa).

The protein belongs to the universal ribosomal protein uS19 family.

In terms of biological role, protein S19 forms a complex with S13 that binds strongly to the 16S ribosomal RNA. This is Small ribosomal subunit protein uS19 from Streptococcus thermophilus (strain ATCC BAA-491 / LMD-9).